The following is a 296-amino-acid chain: Diaminopimelate epimerase (296 aa).

Asn17, Gln49, and Asn69 together coordinate substrate. Cys78 functions as the Proton donor in the catalytic mechanism. Substrate contacts are provided by residues 79 to 80, Asn171, Asn205, and 223 to 224; these read GN and ER. The Proton acceptor role is filled by Cys232. 233-234 serves as a coordination point for substrate; that stretch reads GT.

This sequence belongs to the diaminopimelate epimerase family. Homodimer.

The protein localises to the cytoplasm. The catalysed reaction is (2S,6S)-2,6-diaminopimelate = meso-2,6-diaminopimelate. It participates in amino-acid biosynthesis; L-lysine biosynthesis via DAP pathway; DL-2,6-diaminopimelate from LL-2,6-diaminopimelate: step 1/1. Catalyzes the stereoinversion of LL-2,6-diaminopimelate (L,L-DAP) to meso-diaminopimelate (meso-DAP), a precursor of L-lysine and an essential component of the bacterial peptidoglycan. The chain is Diaminopimelate epimerase from Methylorubrum extorquens (strain PA1) (Methylobacterium extorquens).